The primary structure comprises 199 residues: Imidazoleglycerol-phosphate dehydratase (199 aa).

Belongs to the imidazoleglycerol-phosphate dehydratase family.

It is found in the cytoplasm. The catalysed reaction is D-erythro-1-(imidazol-4-yl)glycerol 3-phosphate = 3-(imidazol-4-yl)-2-oxopropyl phosphate + H2O. The protein operates within amino-acid biosynthesis; L-histidine biosynthesis; L-histidine from 5-phospho-alpha-D-ribose 1-diphosphate: step 6/9. The protein is Imidazoleglycerol-phosphate dehydratase of Acidithiobacillus ferrooxidans (strain ATCC 53993 / BNL-5-31) (Leptospirillum ferrooxidans (ATCC 53993)).